The following is a 507-amino-acid chain: ATP synthase subunit alpha, chloroplastic (507 aa).

Isoleucine 170 to lysine 177 contributes to the ATP binding site.

This sequence belongs to the ATPase alpha/beta chains family. In terms of assembly, F-type ATPases have 2 components, CF(1) - the catalytic core - and CF(0) - the membrane proton channel. CF(1) has five subunits: alpha(3), beta(3), gamma(1), delta(1), epsilon(1). CF(0) has four main subunits: a, b, b' and c.

Its subcellular location is the plastid. It localises to the chloroplast thylakoid membrane. The enzyme catalyses ATP + H2O + 4 H(+)(in) = ADP + phosphate + 5 H(+)(out). In terms of biological role, produces ATP from ADP in the presence of a proton gradient across the membrane. The alpha chain is a regulatory subunit. In Adiantum capillus-veneris (Maidenhair fern), this protein is ATP synthase subunit alpha, chloroplastic.